The chain runs to 66 residues: Beta-toxin Chui4 (66 aa).

The LCN-type CS-alpha/beta domain maps to 1 to 66 (KEGYLVELGT…VWPLKNKTCK (66 aa)). Cystine bridges form between C12–C65, C16–C41, C25–C46, and C29–C48.

It belongs to the long (4 C-C) scorpion toxin superfamily. Sodium channel inhibitor family. Beta subfamily. In terms of tissue distribution, expressed by the venom gland.

The protein localises to the secreted. Functionally, beta toxins bind voltage-independently at site-4 of sodium channels (Nav) and shift the voltage of activation toward more negative potentials thereby affecting sodium channel activation and promoting spontaneous and repetitive firing. Acts on human sodium channel Nav1.6/SCN8A. Also able to weakly shift the activation curves of human Nav1.2/SCN2A and Nav1.4/SCN4A. The chain is Beta-toxin Chui4 from Centruroides huichol (Scorpion).